Here is a 913-residue protein sequence, read N- to C-terminus: SUN domain-containing protein 1 (913 aa).

The segment at 1-139 is LMNA-binding; sequence MDFSRLHTYT…VLRHPVLDES (139 aa). Topologically, residues 1 to 415 are nuclear; that stretch reads MDFSRLHTYT…LTRCLRNICK (415 aa). A phosphoserine mark is found at S48 and S66. The span at 69 to 81 shows a compositional bias: polar residues; the sequence is SQAIDSHISTSRA. The tract at residues 69 to 120 is disordered; the sequence is SQAIDSHISTSRATPAKGRETRTVKQRRSASKPAFSINHLSGKGLSSSTSHD. The span at 108 to 120 shows a compositional bias: low complexity; it reads LSGKGLSSSTSHD. S139 carries the phosphoserine modification. The interval 209 to 302 is SYNE2-binding; that stretch reads SRVYSRDRTL…MTAGELSRVD (94 aa). The segment at 223-302 is EMD-binding; it reads VSFYLDRTLW…MTAGELSRVD (80 aa). A helical membrane pass occupies residues 416–436; it reads VFVLLLPLLLLLGAGVSLWGQ. The Perinuclear space portion of the chain corresponds to 437–913; it reads GNFFSLLPVL…RFRVHGEPIQ (477 aa). The interval 456 to 485 is disordered; sequence RVDDSKGMHRPGPLPPSPPPKVDHKASQWP. Coiled coils occupy residues 491–533 and 563–638; these read GQKV…EGLS and HHDH…CEQA. A sufficient for interaction with SYNE1 and SYNE2 region spans residues 703–913; sequence TSEAIVSAVN…RFRVHGEPIQ (211 aa). The region spanning 751–912 is the SUN domain; that stretch reads GGSILSTRCS…YRFRVHGEPI (162 aa).

Core component of the LINC complex which is composed of inner nuclear membrane SUN domain-containing proteins coupled to outer nuclear membrane KASH domain-containing nesprins. SUN and KASH domain-containing proteins seem to bind each other promiscuously; however, differentially expression of LINC complex constituents is giving rise to specific assemblies. At least SUN1/2-containing core LINC complexes are proposed to be hexameric composed of three protomers of each KASH and SUN domain-containing protein. Interacts with KASH5 (via the last 22 amino acids); this interaction mediates KASH5 telomere localization by forming a SUN1:KASH5 LINC complex. Isoform 5 is proposed to form a non-nuclear spermatogenesis-specific LINC complex with SYNE3 during sperm head formation. Interacts with SYNE2 and SYNE1; probably forming respective LINC complexes. Interacts with A-type lamin with a strong preference for unprocessed A-type lamin compared with the mature protein. Interaction with lamins B1 and C is hardly detectable. Interacts with NAT10. Interacts with EMD and TSNAX. Associates with the nuclear pore complex (NPC). Interacts with CCDC79/TERB1; promoting the accumulation of the LINC complex complexes at the telomere-nuclear envelope attachment sites. Interacts with IRAG2. Interacts (via KASH domain) with TMEM258. The disulfide bond with KASH domain-containing nesprins is required for stability of the respective LINC complexes under tensile forces. Widely expressed. Expressed in cochlear outer hair cells (at protein level). Seven isoforms are expressed in testis including testis-specific isoform 5. Isoform 5 is the only isoform expressed at the end of sperm differentiation. Six isoforms are expressed in muscle, heart and brain, four isoforms in kidney and three isoforms in liver.

Its subcellular location is the nucleus inner membrane. The protein localises to the cytoplasmic vesicle. The protein resides in the secretory vesicle. It is found in the acrosome outer membrane. Functionally, as a component of the LINC (LInker of Nucleoskeleton and Cytoskeleton) complex involved in the connection between the nuclear lamina and the cytoskeleton. The nucleocytoplasmic interactions established by the LINC complex play an important role in the transmission of mechanical forces across the nuclear envelope and in nuclear movement and positioning. Required for interkinetic nuclear migration (INM) and essential for nucleokinesis and centrosome-nucleus coupling during radial neuronal migration in the cerebral cortex and during glial migration. Involved in telomere attachment to nuclear envelope in the prophase of meiosis implicating a SUN1/2:KASH5 LINC complex in which SUN1 and SUN2 seem to act at least partial redundantly. Required for gametogenesis and involved in selective gene expression of coding and non-coding RNAs needed for gametogenesis. Helps to define the distribution of nuclear pore complexes (NPCs). Required for efficient localization of SYNE4 in the nuclear envelope. May be involved in nuclear remodeling during sperm head formation in spermatogenesis. May play a role in DNA repair by suppressing non-homologous end joining repair to facilitate the repair of DNA cross-links. Its function is as follows. Isoform 5 may be involved in nuclear remodeling during sperm head formation in spermatogenesis. A probable SUN1 isoform 5:SYNE3 LINC complex may tether spermatid nuclei to anterior cytoskeletal structures such as actin filaments present at membraneous junctions of spermatids and Sertoli cells. This chain is SUN domain-containing protein 1, found in Mus musculus (Mouse).